The primary structure comprises 87 residues: MAEKEMNFEEALARLEAVVKELEDGRLPLQKALELFAEGIGLSRICNRYLEDAEQRIAILTADEKGGVVLRELGPSPAAREDTNDEL.

This sequence belongs to the XseB family. As to quaternary structure, heterooligomer composed of large and small subunits.

Its subcellular location is the cytoplasm. It carries out the reaction Exonucleolytic cleavage in either 5'- to 3'- or 3'- to 5'-direction to yield nucleoside 5'-phosphates.. In terms of biological role, bidirectionally degrades single-stranded DNA into large acid-insoluble oligonucleotides, which are then degraded further into small acid-soluble oligonucleotides. The polypeptide is Exodeoxyribonuclease 7 small subunit (Pelotomaculum thermopropionicum (strain DSM 13744 / JCM 10971 / SI)).